We begin with the raw amino-acid sequence, 834 residues long: Periplasmic nitrate reductase (834 aa).

A signal peptide (tat-type signal) is located at residues 1-32; sequence MTEPKIDRRQLLKLEAAAIAAAAAGMPTVARA. The 57-residue stretch at 44 to 100 folds into the 4Fe-4S Mo/W bis-MGD-type domain; it reads LKWDKAACRFCGTGCSVMVATKDNRVVATHGDIKAEVNRGLNCVKGYFLSKIMYGHD. The [4Fe-4S] cluster site is built by cysteine 51, cysteine 54, cysteine 58, and cysteine 86. Residues lysine 88, glutamine 155, asparagine 180, cysteine 184, 217-224, 248-252, 267-269, methionine 378, glutamine 382, asparagine 488, 514-515, lysine 537, aspartate 564, and 724-733 each bind Mo-bis(molybdopterin guanine dinucleotide); these read WGSNMAEM, STFEH, QTD, SD, and TGRVVEHWHS. Residue tryptophan 800 participates in substrate binding. The Mo-bis(molybdopterin guanine dinucleotide) site is built by asparagine 808 and lysine 825.

The protein belongs to the prokaryotic molybdopterin-containing oxidoreductase family. NasA/NapA/NarB subfamily. Component of the periplasmic nitrate reductase NapAB complex composed of NapA and NapB. The cofactor is [4Fe-4S] cluster. Mo-bis(molybdopterin guanine dinucleotide) is required as a cofactor. Post-translationally, predicted to be exported by the Tat system. The position of the signal peptide cleavage has not been experimentally proven.

It is found in the periplasm. The catalysed reaction is 2 Fe(II)-[cytochrome] + nitrate + 2 H(+) = 2 Fe(III)-[cytochrome] + nitrite + H2O. Its function is as follows. Catalytic subunit of the periplasmic nitrate reductase complex NapAB. Receives electrons from NapB and catalyzes the reduction of nitrate to nitrite. The sequence is that of Periplasmic nitrate reductase from Bradyrhizobium sp. (strain ORS 278).